We begin with the raw amino-acid sequence, 727 residues long: Glycerol-3-phosphate dehydrogenase, mitochondrial (727 aa).

A mitochondrion-targeting transit peptide spans methionine 1–alanine 42. Residue aspartate 71–glutamate 99 participates in FAD binding. At tyrosine 601 the chain carries Phosphotyrosine. EF-hand domains lie at serine 623–lysine 658 and isoleucine 659–glycine 694. The Ca(2+) site is built by aspartate 672, asparagine 674, asparagine 676, glutamine 678, and glutamate 683.

The protein belongs to the FAD-dependent glycerol-3-phosphate dehydrogenase family. The cofactor is FAD.

It is found in the mitochondrion. The enzyme catalyses a quinone + sn-glycerol 3-phosphate = dihydroxyacetone phosphate + a quinol. It functions in the pathway polyol metabolism; glycerol degradation via glycerol kinase pathway; glycerone phosphate from sn-glycerol 3-phosphate (aerobic route): step 1/1. Calcium-binding enhance the activity of the enzyme. Calcium-responsive mitochondrial glycerol-3-phosphate dehydrogenase which seems to be a key component of the pancreatic beta-cell glucose-sensing device. In Mesocricetus auratus (Golden hamster), this protein is Glycerol-3-phosphate dehydrogenase, mitochondrial (GPD2).